We begin with the raw amino-acid sequence, 806 residues long: Phenylalanine--tRNA ligase beta subunit (806 aa).

The 116-residue stretch at 40-155 (NKGVKGVVVG…SDAEVGADAL (116 aa)) folds into the tRNA-binding domain. The B5 domain maps to 409–484 (VQERTVSVTA…RLYGYDHIPV (76 aa)). Mg(2+) contacts are provided by D462, D468, E471, and E472. The 94-residue stretch at 712–805 (PRFPSMTRDM…VEEKFGAELR (94 aa)) folds into the FDX-ACB domain.

It belongs to the phenylalanyl-tRNA synthetase beta subunit family. Type 1 subfamily. In terms of assembly, tetramer of two alpha and two beta subunits. The cofactor is Mg(2+).

It is found in the cytoplasm. It carries out the reaction tRNA(Phe) + L-phenylalanine + ATP = L-phenylalanyl-tRNA(Phe) + AMP + diphosphate + H(+). This is Phenylalanine--tRNA ligase beta subunit from Bacillus cereus (strain ZK / E33L).